A 490-amino-acid polypeptide reads, in one-letter code: UDP-N-acetylmuramoyl-L-alanyl-D-glutamate--2,6-diaminopimelate ligase (490 aa).

S31 is a binding site for UDP-N-acetyl-alpha-D-muramoyl-L-alanyl-D-glutamate. 109–115 contributes to the ATP binding site; it reads GTNGKTS. UDP-N-acetyl-alpha-D-muramoyl-L-alanyl-D-glutamate-binding positions include N150, 151-152, S178, and R186; that span reads TT. Position 218 is an N6-carboxylysine (K218). Residues R384, 408 to 411, G458, and E462 each bind meso-2,6-diaminopimelate; that span reads DNPR. The Meso-diaminopimelate recognition motif signature appears at 408 to 411; the sequence is DNPR.

It belongs to the MurCDEF family. MurE subfamily. Requires Mg(2+) as cofactor. Post-translationally, carboxylation is probably crucial for Mg(2+) binding and, consequently, for the gamma-phosphate positioning of ATP.

It localises to the cytoplasm. It carries out the reaction UDP-N-acetyl-alpha-D-muramoyl-L-alanyl-D-glutamate + meso-2,6-diaminopimelate + ATP = UDP-N-acetyl-alpha-D-muramoyl-L-alanyl-gamma-D-glutamyl-meso-2,6-diaminopimelate + ADP + phosphate + H(+). It participates in cell wall biogenesis; peptidoglycan biosynthesis. Functionally, catalyzes the addition of meso-diaminopimelic acid to the nucleotide precursor UDP-N-acetylmuramoyl-L-alanyl-D-glutamate (UMAG) in the biosynthesis of bacterial cell-wall peptidoglycan. This chain is UDP-N-acetylmuramoyl-L-alanyl-D-glutamate--2,6-diaminopimelate ligase, found in Bacillus velezensis (strain DSM 23117 / BGSC 10A6 / LMG 26770 / FZB42) (Bacillus amyloliquefaciens subsp. plantarum).